Here is a 1069-residue protein sequence, read N- to C-terminus: RE1-silencing transcription factor (1069 aa).

The interaction with SIN3A stretch occupies residues 32–121 (DLHDLSKAEL…SLELSVVEPQ (90 aa)). The segment at 43–57 (APQLIMLANVALTGE) is interaction with SIN3B. A disordered region spans residues 85 to 104 (SDSEGEGLEESAELKGDPSG). An interaction with ZFP90 region spans residues 144-417 (PVAEDKCKNL…KSKHPTCPSK (274 aa)). The C2H2-type 1 zinc finger occupies 158 to 180 (FRCKPCQYEAESEEQFVHHIRVH). The tract at residues 200–211 (SGASPSEEGEFS) is required for binding to the neuron-restrictive silencer element. C2H2-type zinc fingers lie at residues 215–237 (IRCDRCGYNTNRYDHYTAHLKHH), 247–269 (YKCIICTYTTVSEYHWRKHLRNH), 275–297 (YTCSKCNYFSTEKNNYVQHVRTH), 303–325 (YKCELCPYSSSQKTHLTRHMRTH), 331–354 (FKCDQCNYVASNQHEVTRHARQVH), 360–382 (LNCPHCDYKTADRSNFKKHVELH), and 388–411 (FNCPVCDYAASKKCNLQYHFKSKH). Disordered regions lie at residues 425-737 (KLKK…MELP) and 830-1022 (KASK…GKEG). Positions 451-482 (EQAKTKGVDASARRSERPVKGVGKDVPKEKKP) are enriched in basic and acidic residues. Residues 484-493 (SNASVVQVTT) are compositionally biased toward polar residues. Basic and acidic residues-rich tracts occupy residues 498-511 (SAVETKAAEGKHTD) and 554-576 (ESKPKTSGEVPKGSRVEDRKADK). Residues 584-600 (KGGKKTALKTKTAKKGS) show a composition bias toward basic residues. Polar residues predominate over residues 630–643 (AVVTPSGSTQTELS). 2 stretches are compositionally biased toward pro residues: residues 679 to 706 (PSPPQEPPQVEPPACVEPPPPVEPPCPM) and 713 to 734 (PSPPMEPSQVEPPPHLEPPLPM). 2 stretches are compositionally biased toward basic and acidic residues: residues 851–860 (RREETPKDQE) and 876–886 (GGTEEAGESRA). Positions 894-904 (STSALSSEQSS) are enriched in low complexity. Residues 930 to 943 (TEQKTDRVPLKDSA) are compositionally biased toward basic and acidic residues. A Phosphoserine modification is found at serine 948. Residues 957 to 968 (EAAAPAVVASPP) are compositionally biased toward low complexity. The segment at 981 to 1059 (EGIHSHDGSD…HLNRHLVNVY (79 aa)) is interaction with RCOR1. A C2H2-type 9 zinc finger spans residues 1032–1054 (FVCIFCDRSFRKEKDYSKHLNRH).

In terms of assembly, isoform 1 and isoform 6 form heterodimers. Isoform 6: Forms homodimers and homooligomers; binds to the neuron-restrictive silencer element (NRSE) as monomer. Interacts with SIN3A, SIN3B and RCOR1. Interacts with CDYL. Interacts with EHMT1 and EHMT2 only in the presence of CDYL. Part of a complex containing at least CDYL, REST, WIZ, SETB1, EHMT1 and EHMT2. Interacts (via zinc-finger DNA-binding domain) with ZFP90 (via N- and C-termini); the interaction inhibits REST repressor activity. Interacts (via C2H2-type zinc finger 5) with PRICKLE1. Interacts with FBXW11 and BTRC. Interacts with USP7. Post-translationally, O-glycosylated. In terms of processing, phosphorylated; phosphorylation is required for ubiquitination. Ubiquitinated; ubiquitination is mediated by BTRC and leads to proteasomal degradation in G2 phase. Ubiquitination increases during neuronal differentiation. Deubiquitinated by USP7; leading to its stabilization and promoting the maintenance of neural progenitor cells. Expressed in the hippocampus including the granule cell layer of the dentate gyrus, the pyramidal cell layers of CA1 and CA3, the apical and basilar dendrite layers of the stratum radiatum and stratum oriens of CA1, the stratum lucidum and stratum oriens of CA3 and in astroglia (at protein level). Expressed in the brain, with the highest levels in the neurons of hippocampus, pons/medulla and midbrain.

It localises to the nucleus. Its subcellular location is the cytoplasm. Functionally, transcriptional repressor which binds neuron-restrictive silencer element (NRSE) and represses neuronal gene transcription in non-neuronal cells. Restricts the expression of neuronal genes by associating with two distinct corepressors, SIN3A and RCOR1, which in turn recruit histone deacetylase to the promoters of REST-regulated genes. Mediates repression by recruiting the BHC complex at RE1/NRSE sites which acts by deacetylating and demethylating specific sites on histones, thereby acting as a chromatin modifier. Transcriptional repression by REST-CDYL via the recruitment of histone methyltransferase EHMT2 may be important in transformation suppression. Represses the expression of SRRM4 in non-neural cells to prevent the activation of neural-specific splicing events and to prevent production of REST isoform 6. Repressor activity may be inhibited by forming heterodimers with isoform 6, thereby preventing binding to NRSE or binding to corepressors and leading to derepression of target genes. Also maintains repression of neuronal genes in neural stem cells, and allows transcription and differentiation into neurons by dissociation from RE1/NRSE sites of target genes. Thereby is involved in maintaining the quiescent state of adult hippocampal neural stem cells and preventing premature differentiation into mature neurons. Plays a role in the developmental switch in synaptic NMDA receptor composition during postnatal development, by repressing GRIN2B expression and thereby altering NMDA receptor properties from containing primarily GRIN2B to primarily GRIN2A subunits. Acts as a regulator of osteoblast differentiation. Key repressor of gene expression in hypoxia; represses genes in hypoxia by direct binding to an RE1/NRSE site on their promoter regions. May also function in stress resistance in the brain during aging; possibly by regulating expression of genes involved in cell death and in the stress response. Repressor of gene expression in the hippocampus after ischemia by directly binding to RE1/NRSE sites and recruiting SIN3A and RCOR1 to promoters of target genes, thereby promoting changes in chromatin modifications and ischemia-induced cell death. After ischemia, might play a role in repression of miR-132 expression in hippocampal neurons, thereby leading to neuronal cell death. Binds to the 3' region of the neuron-restrictive silencer element (NRSE), with lower affinity than full-length REST isoform 1. Exhibits weaker repressor activity compared to isoform 1. May negatively regulate the repressor activity of isoform 1 by binding to isoform 1, thereby preventing its binding to NRSE and leading to derepression of target genes. However, in another study, does not appear to be implicated in repressor activity of a NRSE motif-containing reporter construct nor in inhibitory activity on the isoform 1 transcriptional repressor activity. Post-transcriptional inactivation of REST by SRRM4-dependent alternative splicing into isoform 6 is required in mechanosensory hair cells in the inner ear for derepression of neuronal genes and hearing. The polypeptide is RE1-silencing transcription factor (Rest) (Rattus norvegicus (Rat)).